The following is a 283-amino-acid chain: Phosphatidylglycerol--prolipoprotein diacylglyceryl transferase (283 aa).

The next 4 helical transmembrane spans lie at 20-40 (IGGF…IIGL), 60-80 (LVIW…VAFE), 94-114 (IWQG…AILV), and 121-141 (LSFW…QAIG). Residue R142 participates in a 1,2-diacyl-sn-glycero-3-phospho-(1'-sn-glycerol) binding. The next 3 membrane-spanning stretches (helical) occupy residues 183–203 (FLYE…LFFY), 214–234 (GTIT…IEGL), and 248–268 (QVVS…LYLL).

Belongs to the Lgt family.

The protein resides in the cell inner membrane. It carries out the reaction L-cysteinyl-[prolipoprotein] + a 1,2-diacyl-sn-glycero-3-phospho-(1'-sn-glycerol) = an S-1,2-diacyl-sn-glyceryl-L-cysteinyl-[prolipoprotein] + sn-glycerol 1-phosphate + H(+). The protein operates within protein modification; lipoprotein biosynthesis (diacylglyceryl transfer). Functionally, catalyzes the transfer of the diacylglyceryl group from phosphatidylglycerol to the sulfhydryl group of the N-terminal cysteine of a prolipoprotein, the first step in the formation of mature lipoproteins. The polypeptide is Phosphatidylglycerol--prolipoprotein diacylglyceryl transferase (Synechocystis sp. (strain ATCC 27184 / PCC 6803 / Kazusa)).